A 375-amino-acid chain; its full sequence is Platelet-derived growth factor receptor-like protein (375 aa).

The signal sequence occupies residues 1-17; the sequence is MKVWLLLGLLLLHEALG. Positions 19 to 63 are disordered; sequence VAGQHPPKNKRPKEQGENRIKPTNKKAKPKIPKIKDRDTADSAPK. Residues 40–50 are compositionally biased toward basic residues; sequence PTNKKAKPKIP. Residues 62-159 enclose the Ig-like C2-type 1 domain; the sequence is PKSQSIMMQA…GYICRRDEAR (98 aa). Cys96 and Cys143 are disulfide-bonded. The N-linked (GlcNAc...) asparagine glycan is linked to Asn219. The Ig-like C2-type 2 domain maps to 272–375; the sequence is PSTTILASSN…TTVATTVEFS (104 aa). Cys293 and Cys357 are disulfide-bonded.

In terms of assembly, forms a complex composed of PDGFRL, TNK2 and GRB2.

Its subcellular location is the secreted. The polypeptide is Platelet-derived growth factor receptor-like protein (Pdgfrl) (Rattus norvegicus (Rat)).